A 150-amino-acid polypeptide reads, in one-letter code: Protein-export protein SecB (150 aa).

Belongs to the SecB family. In terms of assembly, homotetramer, a dimer of dimers. One homotetramer interacts with 1 SecA dimer.

The protein resides in the cytoplasm. One of the proteins required for the normal export of preproteins out of the cell cytoplasm. It is a molecular chaperone that binds to a subset of precursor proteins, maintaining them in a translocation-competent state. It also specifically binds to its receptor SecA. The protein is Protein-export protein SecB of Chromobacterium violaceum (strain ATCC 12472 / DSM 30191 / JCM 1249 / CCUG 213 / NBRC 12614 / NCIMB 9131 / NCTC 9757 / MK).